The sequence spans 239 residues: Endonuclease V (239 aa).

Residues Asp-48 and Asp-116 each contribute to the Mg(2+) site.

The protein belongs to the endonuclease V family. Mg(2+) serves as cofactor.

It is found in the cytoplasm. The enzyme catalyses Endonucleolytic cleavage at apurinic or apyrimidinic sites to products with a 5'-phosphate.. In terms of biological role, DNA repair enzyme involved in the repair of deaminated bases. Selectively cleaves double-stranded DNA at the second phosphodiester bond 3' to a deoxyinosine leaving behind the intact lesion on the nicked DNA. This chain is Endonuclease V, found in Xanthomonas oryzae pv. oryzae (strain MAFF 311018).